The primary structure comprises 269 residues: Tryptophan synthase alpha chain (269 aa).

Active-site proton acceptor residues include Glu-49 and Asp-60.

Belongs to the TrpA family. As to quaternary structure, tetramer of two alpha and two beta chains.

The catalysed reaction is (1S,2R)-1-C-(indol-3-yl)glycerol 3-phosphate + L-serine = D-glyceraldehyde 3-phosphate + L-tryptophan + H2O. It participates in amino-acid biosynthesis; L-tryptophan biosynthesis; L-tryptophan from chorismate: step 5/5. Functionally, the alpha subunit is responsible for the aldol cleavage of indoleglycerol phosphate to indole and glyceraldehyde 3-phosphate. In Proteus mirabilis (strain HI4320), this protein is Tryptophan synthase alpha chain.